Consider the following 40-residue polypeptide: Potassium channel toxin alpha-KTx 12.3 (40 aa).

4 disulfides stabilise this stretch: C2–C5, C10–C31, C16–C36, and C20–C38.

Expressed by the venom gland.

It is found in the secreted. Functionally, inhibits high conductance calcium-activated potassium channels (KCNMA). Inhibits Shaker B potassium channels. This chain is Potassium channel toxin alpha-KTx 12.3, found in Tityus costatus (Brazilian scorpion).